Here is a 117-residue protein sequence, read N- to C-terminus: Movement protein TGB2 (117 aa).

At 1–11 (MPLIPPPNPQK) the chain is on the cytoplasmic side. Residues 12-32 (TYQIAVLALGLVLLLAFVLIS) traverse the membrane as a helical segment. Residues 33-78 (DHSPKVGDHLHNLPFGGEYKDGTKTIKYFQRPNQHSLSKTLAKSHN) lie on the Lumenal side of the membrane. Residues 79-99 (TTIFLIILGLIGTLHGLHYFS) traverse the membrane as a helical segment. Topologically, residues 100–117 (NNRRISSSLHCVLCQNKH) are cytoplasmic.

This sequence belongs to the Tymovirales TGBp2 protein family.

It localises to the host endoplasmic reticulum membrane. Functionally, plays a role in viral cell-to-cell propagation, by facilitating genome transport to neighboring plant cells through plasmosdesmata,. This chain is Movement protein TGB2, found in Trifolium (WCMV).